A 485-amino-acid chain; its full sequence is Aldehyde dehydrogenase family 3 member A2 (485 aa).

The Cytoplasmic segment spans residues 1–463; it reads MEREVQRVRQ…FLLRRFNKEK (463 aa). 185–190 contributes to the NAD(+) binding site; it reads GNTAVG. Catalysis depends on residues Glu-207 and Cys-241. At Ser-293 the chain carries Phosphoserine. A helical transmembrane segment spans residues 464-484; it reads LGLLVLTFLGIVAAVLVNAGY. The Prevents secretion from ER motif lies at 481–484; that stretch reads NAGY.

Belongs to the aldehyde dehydrogenase family. In terms of assembly, homodimer.

Its subcellular location is the microsome membrane. The protein localises to the endoplasmic reticulum membrane. The enzyme catalyses an aldehyde + NAD(+) + H2O = a carboxylate + NADH + 2 H(+). It carries out the reaction a fatty aldehyde + NAD(+) + H2O = a fatty acid + NADH + 2 H(+). The catalysed reaction is (2E)-hexadecenal + NAD(+) + H2O = (E)-hexadec-2-enoate + NADH + 2 H(+). It catalyses the reaction hexadecanoate + NADH + 2 H(+) = hexadecanal + NAD(+) + H2O. The enzyme catalyses 22-oxodocosanoate + NAD(+) + H2O = docosanedioate + NADH + 2 H(+). It carries out the reaction 2,6,10,14-tetramethylpentadecanal + NAD(+) + H2O = 2,6,10,14-tetramethylpentadecanoate + NADH + 2 H(+). The catalysed reaction is octadecanal + NAD(+) + H2O = octadecanoate + NADH + 2 H(+). It catalyses the reaction dodecanoate + NADH + 2 H(+) = dodecanal + NAD(+) + H2O. The enzyme catalyses decanal + NAD(+) + H2O = decanoate + NADH + 2 H(+). It carries out the reaction tetradecanal + NAD(+) + H2O = tetradecanoate + NADH + 2 H(+). The catalysed reaction is octanal + NAD(+) + H2O = octanoate + NADH + 2 H(+). It catalyses the reaction heptanal + NAD(+) + H2O = heptanoate + NADH + 2 H(+). The enzyme catalyses (2E,6E)-farnesal + NAD(+) + H2O = (2E,6E)-farnesoate + NADH + 2 H(+). In terms of biological role, catalyzes the oxidation of medium and long-chain aliphatic aldehydes to fatty acids. Active on a variety of saturated and unsaturated aliphatic aldehydes between 6 and 24 carbons in length. Responsible for conversion of the sphingosine 1-phosphate (S1P) degradation product hexadecenal to hexadecenoic acid. This is Aldehyde dehydrogenase family 3 member A2 (ALDH3A2) from Macaca fascicularis (Crab-eating macaque).